The following is a 146-amino-acid chain: Hemoglobin subunit beta (146 aa).

Val1 is subject to N-acetylvaline. One can recognise a Globin domain in the interval His2 to His146. Thr12 carries the phosphothreonine modification. Position 44 is a phosphoserine (Ser44). Position 59 is an N6-acetyllysine (Lys59). Residue His63 participates in heme b binding. Lys82 carries the post-translational modification N6-acetyllysine. Position 92 (His92) interacts with heme b. Cys93 bears the S-nitrosocysteine mark. Lys144 is modified (N6-acetyllysine).

Belongs to the globin family. In terms of assembly, heterotetramer of two alpha chains and two beta chains. As to expression, red blood cells.

Involved in oxygen transport from the lung to the various peripheral tissues. The sequence is that of Hemoglobin subunit beta (HBB) from Saguinus mystax (Moustached tamarin).